The sequence spans 361 residues: Mitogen-activated protein kinase 1 (361 aa).

One can recognise a Protein kinase domain in the interval 28–316 (YINLAYIGEG…VEAALAHPYL (289 aa)). ATP-binding positions include 34–42 (IGEGAYGMV) and lysine 57. Residue aspartate 152 is the Proton acceptor of the active site. Threonine 188 is subject to Phosphothreonine. Positions 188 to 190 (TEY) match the TXY motif. Tyrosine 190 carries the phosphotyrosine modification.

It belongs to the protein kinase superfamily. CMGC Ser/Thr protein kinase family. MAP kinase subfamily. Interacts with CDK2AP2. The cofactor is Mg(2+). In terms of processing, dually phosphorylated on Thr-188 and Tyr-190, which activates the enzyme. In terms of tissue distribution, expressed in the central nervous system, kidney, liver, intestine and the hematopoietic system. Also found in heart, muscle, pancreas and lung.

The protein localises to the cytoplasm. Its subcellular location is the cytoskeleton. It localises to the microtubule organizing center. It is found in the centrosome. The protein resides in the spindle. It carries out the reaction L-seryl-[protein] + ATP = O-phospho-L-seryl-[protein] + ADP + H(+). The catalysed reaction is L-threonyl-[protein] + ATP = O-phospho-L-threonyl-[protein] + ADP + H(+). Its activity is regulated as follows. Activated by tyrosine phosphorylation during the M phase of the meiotic cell cycle. Dephosphorylated and inactivated by DUSP1. In terms of biological role, serine/threonine kinase which acts as an essential component of the MAP kinase signal transduction pathway. Plays an important role in the MAPK/ERK cascade. Depending on the cellular context, this cascade mediates diverse biological functions such as cell growth, adhesion, survival and differentiation through the regulation of transcription, translation, cytoskeletal rearrangements. The MAPK/ERK cascade also plays a role in initiation and regulation of meiosis, mitosis, and postmitotic functions in differentiated cells by phosphorylating a number of transcription factors. Many of the substrates are localized in the nucleus, and seem to participate in the regulation of transcription upon stimulation. However, other substrates are found in the cytosol as well as in other cellular organelles, and those are responsible for processes such as translation, mitosis and apoptosis. Moreover, the MAPK/ERK cascade is also involved in the regulation of the endosomal dynamics, including lysosome processing and endosome cycling through the perinuclear recycling compartment (PNRC); as well as in the fragmentation of the Golgi apparatus during mitosis. Phosphorylates microtubule-associated protein 2 (MAP2), myelin basic protein (MBP) and Elk-1. Phosphorylates dual specificity protein phosphatase 1 (DUSP1) during meiosis, increasing its stability. Activated by M phase promoting factor (MPF). Plays a role in the spindle assembly checkpoint. The polypeptide is Mitogen-activated protein kinase 1 (mapk1) (Xenopus laevis (African clawed frog)).